The primary structure comprises 466 residues: Coagulation factor IX (466 aa).

Residues 1-25 (MRCLNMIMAEPPGLITICLLGYLLG) form the signal peptide. Residues 26–46 (ADCTVFLDHEDATKVLSRPKR) constitute a propeptide that is removed on maturation. Ca(2+)-binding residues include Tyr-47, Asn-48, Glu-53, Glu-54, Glu-61, Glu-63, Glu-66, Glu-67, Glu-72, Glu-73, and Glu-76. The Gla domain occupies 47 to 92 (YNSGKLEEFVQGNLERECMEEKCSFEEAREVFENTEKTTEFWKQYV). Residues Glu-53, Glu-54, Glu-61, Glu-63, Glu-66, Glu-67, Glu-72, Glu-73, Glu-76, Glu-79, and Glu-82 each carry the 4-carboxyglutamate modification. Glu-61 is a binding site for Mg(2+). An intrachain disulfide couples Cys-64 to Cys-69. Glu-66 contributes to the Mg(2+) binding site. Position 72 (Glu-72) interacts with Mg(2+). Glu-76 serves as a coordination point for Mg(2+). Glu-82 lines the Ca(2+) pocket. A Mg(2+)-binding site is contributed by Glu-82. O-linked (GalNAc...) threonine glycosylation occurs at Thr-85. Glu-86, Asp-93, Gly-94, and Gln-96 together coordinate Ca(2+). At Glu-86 the chain carries 4-carboxyglutamate. Glu-86 provides a ligand contact to Mg(2+). Residues 93 to 129 (DGDQCESNPCLNGGICKDDINSYECWCQTGFEGKNCE) enclose the EGF-like 1; calcium-binding domain. Cystine bridges form between Cys-97-Cys-108, Cys-102-Cys-117, Cys-119-Cys-128, Cys-134-Cys-145, Cys-141-Cys-155, Cys-157-Cys-170, Cys-178-Cys-340, Cys-257-Cys-273, Cys-387-Cys-401, and Cys-412-Cys-440. O-linked (Glc...) serine glycosylation occurs at Ser-99. 2 residues coordinate Ca(2+): Asp-110 and Asp-111. Asp-110 bears the (3R)-3-hydroxyaspartate mark. Ser-114 is modified (phosphoserine). The 42-residue stretch at 130-171 (LDVTCNIKNGRCKQFCKLDADNKVVCSCTTGYQLAEDQKSCE) folds into the EGF-like 2 domain. The propeptide at 193–231 (AETLFLNMDYENSTTDYENSAEAEKNVDNVTQPLNDLTR) is activation peptide. A Sulfotyrosine modification is found at Tyr-202. A Phosphoserine modification is found at Ser-205. At Thr-206 the chain carries Phosphothreonine; alternate. Thr-206 carries an O-linked (GalNAc...) threonine; alternate glycan. Residue Asn-221 is glycosylated (N-linked (GlcNAc...) asparagine). O-linked (GalNAc...) threonine glycosylation is found at Thr-223 and Thr-230. Positions 232–464 (IVGGKTAKPG…YVNWIKEKTK (233 aa)) constitute a Peptidase S1 domain. His-272 (charge relay system) is an active-site residue. Ca(2+) contacts are provided by Glu-286, Asn-288, Glu-291, Glu-293, and Glu-296. The Charge relay system role is filled by Asp-320. Ser-416 serves as the catalytic Charge relay system.

Belongs to the peptidase S1 family. Heterodimer of a light chain and a heavy chain; disulfide-linked. Interacts (inactive and activated) with F11 (activated) in calcium-dependent manner. Interacts with SERPINC1. In terms of processing, the iron and 2-oxoglutarate dependent 3-hydroxylation of aspartate and asparagine is (R) stereospecific within EGF domains. Post-translationally, activated by factor XIa, which excises the activation peptide. The propeptide can also be removed by snake venom protease. Activated by coagulation factor VIIa-tissue factor (F7-F3) complex in calcium-dependent manner. Predominantly O-glucosylated at Ser-99 by POGLUT1 in vitro.

The protein localises to the secreted. It catalyses the reaction Selective cleavage of Arg-|-Ile bond in factor X to form factor Xa.. Factor IX is a vitamin K-dependent plasma protein that participates in the intrinsic pathway of blood coagulation by converting factor X to its active form in the presence of Ca(2+) ions, phospholipids, and factor VIIIa. In Felis catus (Cat), this protein is Coagulation factor IX (F9).